The chain runs to 195 residues: Group XIIB secretory phospholipase A2-like protein (195 aa).

Positions 1–19 (MKLLCGFFLLWLGLVGNLA) are cleaved as a signal peptide. Ca(2+) is bound by residues S89, Y91, L93, and D116.

This sequence belongs to the phospholipase A2 family. The cofactor is Ca(2+).

The protein localises to the secreted. Its function is as follows. Not known; does not seem to have catalytic activity. In Mus musculus (Mouse), this protein is Group XIIB secretory phospholipase A2-like protein (Pla2g12b).